The following is a 219-amino-acid chain: Flagellar transcriptional regulator FlhC (219 aa).

Zn(2+) contacts are provided by Cys-137, Cys-140, Cys-157, and Cys-160.

Belongs to the FlhC family. As to quaternary structure, heterohexamer composed of two FlhC and four FlhD subunits. Each FlhC binds a FlhD dimer, forming a heterotrimer, and a hexamer assembles by dimerization of two heterotrimers. It depends on Zn(2+) as a cofactor.

It localises to the cytoplasm. In terms of biological role, functions in complex with FlhD as a master transcriptional regulator that regulates transcription of several flagellar and non-flagellar operons by binding to their promoter region. Activates expression of class 2 flagellar genes, including fliA, which is a flagellum-specific sigma factor that turns on the class 3 genes. Also regulates genes whose products function in a variety of physiological pathways. This Paraburkholderia phymatum (strain DSM 17167 / CIP 108236 / LMG 21445 / STM815) (Burkholderia phymatum) protein is Flagellar transcriptional regulator FlhC.